Consider the following 297-residue polypeptide: Homoserine kinase (297 aa).

82–92 (PLTRGLGSSAS) lines the ATP pocket.

It belongs to the GHMP kinase family. Homoserine kinase subfamily.

It is found in the cytoplasm. It catalyses the reaction L-homoserine + ATP = O-phospho-L-homoserine + ADP + H(+). The protein operates within amino-acid biosynthesis; L-threonine biosynthesis; L-threonine from L-aspartate: step 4/5. Functionally, catalyzes the ATP-dependent phosphorylation of L-homoserine to L-homoserine phosphate. This is Homoserine kinase from Bacillus thuringiensis subsp. konkukian (strain 97-27).